We begin with the raw amino-acid sequence, 393 residues long: Ferrochelatase, mitochondrial (393 aa).

A mitochondrion-targeting transit peptide spans 1-31 (MLSRTIRTQGSFLRRSQLTITRSFSVTFNMQ). Asp351 is a catalytic residue.

The protein belongs to the ferrochelatase family. The leader peptide may be processed in two proteolytic steps, first between Ser-23 and Phe-24, second and by a different protease, to yield the mature protein.

Its subcellular location is the mitochondrion inner membrane. It carries out the reaction heme b + 2 H(+) = protoporphyrin IX + Fe(2+). The protein operates within porphyrin-containing compound metabolism; protoheme biosynthesis; protoheme from protoporphyrin-IX: step 1/1. Its function is as follows. Catalyzes the ferrous insertion into protoporphyrin IX. This is Ferrochelatase, mitochondrial (HEM15) from Saccharomyces cerevisiae (strain ATCC 204508 / S288c) (Baker's yeast).